The following is a 738-amino-acid chain: NAD(P)H-quinone oxidoreductase subunit 5, chloroplastic (738 aa).

Helical transmembrane passes span 9–29, 39–59, 89–109, 125–145, 147–167, 185–205, 219–239, 258–278, 280–300, 327–347, 354–374, 396–416, 425–445, 542–562, 610–630, 691–711, and 717–737; these read WVIPLLPLPVIMSMGFGLFLI, IWAFPSILLLSIAMVFSLHLS, VDPLTSIMLILITTVGILVLI, FVYISFFNTSMLGLVTSSNLI, IYFFWELVGMCSYLLIGFWFT, GDFGLLLGILGFFWITGSLEF, NGINSLLTTLCAFLLFLGAVA, TPISALIHAATMVAAGIFLLA, LLPLFISLPWIMSFISLIGTI, LGYMMLALGIGSYQAALFHLI, ALLFLGSGSVIHSMEPLVGYS, TTFLCGTLSLCGIPPLACFWS, WLYSPFFGIIASFTAGLTAFY, LFPLLILLLFTLFIGSIGIHF, SLAIFGLFIAYIFYGSAYSFF, GVIDGITNGVGLAGFCIGEEI, and GRISSYLFFFLCYVSLFLFFI.

It belongs to the complex I subunit 5 family. NDH is composed of at least 16 different subunits, 5 of which are encoded in the nucleus.

Its subcellular location is the plastid. The protein resides in the chloroplast thylakoid membrane. It carries out the reaction a plastoquinone + NADH + (n+1) H(+)(in) = a plastoquinol + NAD(+) + n H(+)(out). The catalysed reaction is a plastoquinone + NADPH + (n+1) H(+)(in) = a plastoquinol + NADP(+) + n H(+)(out). Functionally, NDH shuttles electrons from NAD(P)H:plastoquinone, via FMN and iron-sulfur (Fe-S) centers, to quinones in the photosynthetic chain and possibly in a chloroplast respiratory chain. The immediate electron acceptor for the enzyme in this species is believed to be plastoquinone. Couples the redox reaction to proton translocation, and thus conserves the redox energy in a proton gradient. The chain is NAD(P)H-quinone oxidoreductase subunit 5, chloroplastic (ndhF) from Zea mays (Maize).